The chain runs to 375 residues: Putative glutamate--cysteine ligase 2 (375 aa).

Belongs to the glutamate--cysteine ligase type 2 family. YbdK subfamily.

It carries out the reaction L-cysteine + L-glutamate + ATP = gamma-L-glutamyl-L-cysteine + ADP + phosphate + H(+). Functionally, ATP-dependent carboxylate-amine ligase which exhibits weak glutamate--cysteine ligase activity. The polypeptide is Putative glutamate--cysteine ligase 2 (Azoarcus sp. (strain BH72)).